Here is a 453-residue protein sequence, read N- to C-terminus: DDB1- and CUL4-associated factor 12 (453 aa).

Over residues 1-12 the composition is skewed to basic residues; it reads MARKAVSRKRKA. The disordered stretch occupies residues 1–34; it reads MARKAVSRKRKASASPGAGSDAQGPQFGWDHSLH. The required for nuclear location and interaction with MOV10 stretch occupies residues 1-38; it reads MARKAVSRKRKASASPGAGSDAQGPQFGWDHSLHKRKR. Ser15 bears the Phosphoserine mark. WD repeat units follow at residues 138 to 178, 182 to 220, 250 to 289, and 338 to 375; these read QQGC…PVCV, GHKD…LTKS, PDNC…SKLL, and ERGS…FLEE.

The protein belongs to the WD repeat DCAF12 family. Component of the DCX(DCAF12) E3 ubiquitin ligase complex, at least composed of CUL4 (CUL4A or CUL4B), DDB1, DCAF12 and RBX1.

The protein localises to the cytoplasm. Its subcellular location is the cytoskeleton. It is found in the microtubule organizing center. It localises to the centrosome. The protein resides in the nucleus. It participates in protein modification; protein ubiquitination. Substrate-recognition component of a DCX (DDB1-CUL4-X-box) E3 ubiquitin-protein ligase complex of the DesCEND (destruction via C-end degrons) pathway, which recognizes a C-degron located at the extreme C terminus of target proteins, leading to their ubiquitination and degradation. The C-degron recognized by the DesCEND pathway is usually a motif of less than ten residues and can be present in full-length proteins, truncated proteins or proteolytically cleaved forms. The DCX(DCAF12) complex specifically recognizes proteins with a diglutamate (Glu-Glu) at the C-terminus, such as MAGEA3, MAGEA6 and CCT5, leading to their ubiquitination and degradation. Ubiquitination of MAGEA3, MAGEA6 by DCX(DCAF12) complex is required for starvation-induced autophagy. Also directly recognizes the C-terminal glutamate-leucine (Glu-Leu) degron as an alternative degron in proteins such as MOV10, leading to their ubiquitination and degradation. Controls the protein level of MOV10 during spermatogenesis and in T cells, especially after their activation. The chain is DDB1- and CUL4-associated factor 12 from Mus musculus (Mouse).